A 122-amino-acid polypeptide reads, in one-letter code: Movement protein TGB2 (122 aa).

The Cytoplasmic portion of the chain corresponds to 1–12; it reads MVKSTVPTRPNK. The helical transmembrane segment at 13–33 threads the bilayer; sequence YWPGVVAIGLVSLFIFLSVSN. Topologically, residues 34–76 are lumenal; sequence QKHSTTSGDNIHKFSNGGTYRDGSKCITYNRNSPLAYNGSSSN. A helical transmembrane segment spans residues 77 to 97; that stretch reads NTLFWLCLLGLSMVWIAYCGY. Residues 98 to 122 are Cytoplasmic-facing; that stretch reads KSLSGQWHSCQHDKNERNFLFECFE.

The protein belongs to the virgaviridae/benyvirus TGB2 movement protein family. Interacts with movement protein TGB3. TGB1-TGB3-TGB2 complex formation is enhanced by ATP hydrolysis.

It localises to the host cell junction. It is found in the host plasmodesma. Its subcellular location is the host endoplasmic reticulum membrane. The protein resides in the host cytoplasm. The protein localises to the host cytoskeleton. In terms of biological role, participates in the transport of viral genome to neighboring plant cells directly through plasmodesmata, without any budding. TGBp2 and TGBp3 are necessary for intracellular delivery of TGBp1-containing vRNPs to plasmodesmata. Can gate plasmodesmata and increase their size exclusion limit. To a lesser extent than TGB3, induces host actin cytoskeleton network thickening, which probably plays a major role in virus cell-to-cell movement. This Peanut clump virus (isolate 87/TGTA2) (PCV) protein is Movement protein TGB2.